A 300-amino-acid polypeptide reads, in one-letter code: Geranylgeranyl pyrophosphate synthase (300 aa).

An N-acetylmethionine modification is found at Met1. The isopentenyl diphosphate site is built by Lys25, Arg28, and His57. Mg(2+) is bound by residues Asp64 and Asp68. Residue Arg73 coordinates dimethylallyl diphosphate. Arg74 lines the isopentenyl diphosphate pocket. Dimethylallyl diphosphate contacts are provided by Lys151, Thr152, Gln185, Lys202, and Lys212.

The protein belongs to the FPP/GGPP synthase family. Homohexamer; trimer of homodimers. Mg(2+) serves as cofactor.

The protein localises to the cytoplasm. The protein resides in the perinuclear region. Its subcellular location is the myofibril. It localises to the sarcomere. It is found in the z line. It carries out the reaction isopentenyl diphosphate + dimethylallyl diphosphate = (2E)-geranyl diphosphate + diphosphate. The catalysed reaction is isopentenyl diphosphate + (2E)-geranyl diphosphate = (2E,6E)-farnesyl diphosphate + diphosphate. It catalyses the reaction isopentenyl diphosphate + (2E,6E)-farnesyl diphosphate = (2E,6E,10E)-geranylgeranyl diphosphate + diphosphate. Its pathway is isoprenoid biosynthesis; farnesyl diphosphate biosynthesis; farnesyl diphosphate from geranyl diphosphate and isopentenyl diphosphate: step 1/1. The protein operates within isoprenoid biosynthesis; geranyl diphosphate biosynthesis; geranyl diphosphate from dimethylallyl diphosphate and isopentenyl diphosphate: step 1/1. It functions in the pathway isoprenoid biosynthesis; geranylgeranyl diphosphate biosynthesis; geranylgeranyl diphosphate from farnesyl diphosphate and isopentenyl diphosphate: step 1/1. In terms of biological role, catalyzes the trans-addition of the three molecules of isopentenyl diphosphate (IPP) onto dimethylallyl pyrophosphate (DMAPP) to form geranylgeranyl pyrophosphate, an important precursor of carotenoids and geranylated proteins. The sequence is that of Geranylgeranyl pyrophosphate synthase from Mus musculus (Mouse).